The sequence spans 218 residues: MPLSETMYCAQQINIPPALPNMLKQFTKAAIRTQPRDVLQWAADYFSALSKGQDLPVKKRLELPVATQKTDTGLTPGLLKILHQQLTSKETVTKDELLPKWKALHLPVEQLDTILALGNFSENINWMQFFALACSALGGSITSALKHACEILTEDPEGGPAQIPFHMFRSLYTYLAHLDGEIPEEQIDSFLHSLEGQAQSQGGMVQPSNFTSLHTAEK.

In terms of domain architecture, RIIa spans 17–54 (PALPNMLKQFTKAAIRTQPRDVLQWAADYFSALSKGQD). A disordered region spans residues 199-218 (QSQGGMVQPSNFTSLHTAEK).

It belongs to the ropporin family. In terms of assembly, component of axonemal radial spoke complexes.

The protein localises to the cell projection. It localises to the cilium. It is found in the flagellum. Functions as part of axonemal radial spoke complexes that play an important part in the motility of sperm and cilia. Important for male fertility. Involved in fibrous sheath integrity and sperm motility, plays a role in PKA-dependent signaling processes required for spermatozoa capacitation. The polypeptide is Ropporin-1-like protein (ropn1l) (Danio rerio (Zebrafish)).